The primary structure comprises 633 residues: Glutathione S-transferase C-terminal domain-containing protein (633 aa).

Residues 130-332 (LGFKKTCLKA…QEVPGVKTAA (203 aa)) enclose the GST C-terminal domain. The interval 191–233 (NDDKLRRQKLKQQKADGVGPPLTKGKAKSKVHTQETSEGLDSS) is disordered. Positions 224-233 (QETSEGLDSS) are enriched in polar residues. S233 is subject to Phosphoserine.

It belongs to the GSTCD family. In terms of tissue distribution, widely expressed in cell types relevant to airway function, including airway smooth muscle cells and epithelial cells.

It is found in the cytoplasm. The sequence is that of Glutathione S-transferase C-terminal domain-containing protein (GSTCD) from Homo sapiens (Human).